The sequence spans 270 residues: Alpha N-terminal protein methyltransferase 1 (270 aa).

Residues glycine 114, arginine 119, 137-139, 165-166, and glutamine 180 each bind S-adenosyl-L-methionine; these read EQN and LQ.

This sequence belongs to the methyltransferase superfamily. NTM1 family.

It catalyses the reaction N-terminal L-alanyl-L-prolyl-L-lysyl-[protein] + 3 S-adenosyl-L-methionine = N-terminal N,N,N-trimethyl-L-alanyl-L-prolyl-L-lysyl-[protein] + 3 S-adenosyl-L-homocysteine + 3 H(+). It carries out the reaction N-terminal L-seryl-L-prolyl-L-lysyl-[protein] + 3 S-adenosyl-L-methionine = N-terminal N,N,N-trimethyl-L-seryl-L-prolyl-L-lysyl-[protein] + 3 S-adenosyl-L-homocysteine + 3 H(+). The catalysed reaction is N-terminal L-prolyl-L-prolyl-L-lysyl-[protein] + 2 S-adenosyl-L-methionine = N-terminal N,N-dimethyl-L-prolyl-L-prolyl-L-lysyl-[protein] + 2 S-adenosyl-L-homocysteine + 2 H(+). Alpha-N-methyltransferase that methylates the N-terminus of target proteins containing the N-terminal motif [Ala/Pro/Ser]-Pro-Lys when the initiator Met is cleaved. Specifically catalyzes mono-, di- or tri-methylation of exposed alpha-amino group of Ala or Ser residue in the [Ala/Ser]-Pro-Lys motif and mono- or di-methylation of Pro in the Pro-Pro-Lys motif. This Dictyostelium discoideum (Social amoeba) protein is Alpha N-terminal protein methyltransferase 1.